The primary structure comprises 111 residues: Probable 4-amino-4-deoxy-L-arabinose-phosphoundecaprenol flippase subunit ArnE (111 aa).

Over 1–35 (MIWLTLVFASLLSVAGQLCQKQATCFVAISKRRKH) the chain is Cytoplasmic. A helical transmembrane segment spans residues 36–56 (IVLWLGLALACLGLAMVLWLL). An EamA domain is found at 40–109 (LGLALACLGL…IIGGIVILGS (70 aa)). At 57-60 (VLQN) the chain is on the periplasmic side. Residues 61 to 81 (VPVGIAYPMLSLNFVWVTLAA) form a helical membrane-spanning segment. The Cytoplasmic segment spans residues 82-87 (VKLWHE). A helical membrane pass occupies residues 88-108 (PVSPRHWCGVAFIIGGIVILG). The Periplasmic segment spans residues 109–111 (STV).

It belongs to the ArnE family. As to quaternary structure, heterodimer of ArnE and ArnF.

The protein resides in the cell inner membrane. Its pathway is bacterial outer membrane biogenesis; lipopolysaccharide biosynthesis. Its function is as follows. Translocates 4-amino-4-deoxy-L-arabinose-phosphoundecaprenol (alpha-L-Ara4N-phosphoundecaprenol) from the cytoplasmic to the periplasmic side of the inner membrane. This chain is Probable 4-amino-4-deoxy-L-arabinose-phosphoundecaprenol flippase subunit ArnE, found in Escherichia coli O157:H7.